The primary structure comprises 227 residues: UPF0173 metal-dependent hydrolase BALH_4194 (227 aa).

This sequence belongs to the UPF0173 family.

In Bacillus thuringiensis (strain Al Hakam), this protein is UPF0173 metal-dependent hydrolase BALH_4194.